A 476-amino-acid polypeptide reads, in one-letter code: 3-isopropylmalate dehydratase large subunit (476 aa).

Cys357, Cys417, and Cys420 together coordinate [4Fe-4S] cluster.

The protein belongs to the aconitase/IPM isomerase family. LeuC type 1 subfamily. Heterodimer of LeuC and LeuD. [4Fe-4S] cluster is required as a cofactor.

The catalysed reaction is (2R,3S)-3-isopropylmalate = (2S)-2-isopropylmalate. It participates in amino-acid biosynthesis; L-leucine biosynthesis; L-leucine from 3-methyl-2-oxobutanoate: step 2/4. Functionally, catalyzes the isomerization between 2-isopropylmalate and 3-isopropylmalate, via the formation of 2-isopropylmaleate. This Mycobacterium avium (strain 104) protein is 3-isopropylmalate dehydratase large subunit.